The following is a 423-amino-acid chain: Cell adhesion molecule CEACAM16 (423 aa).

The first 22 residues, 1–22 (MKMPLTWGSWFLLSAWILNAGA), serve as a signal peptide directing secretion. An N-linked (GlcNAc...) asparagine glycan is attached at Asn-38. The disordered stretch occupies residues 77–96 (ETPGPAHTGREAVRPDGSLD). The segment covering 84–95 (TGREAVRPDGSL) has biased composition (basic and acidic residues). Ig-like C2-type domains lie at 134-219 (PPTV…LNLT) and 224-310 (PERV…ASVV). Cysteines 155 and 202 form a disulfide. Residue Asn-217 is glycosylated (N-linked (GlcNAc...) asparagine). Cys-253 and Cys-294 are joined by a disulfide.

The protein belongs to the immunoglobulin superfamily. CEA family. As to quaternary structure, homooligomer; can for homodimers and homotetramers. Interacts with TECTA and TECTB.

It is found in the secreted. Its function is as follows. Required for proper hearing, plays a role in maintaining the integrity of the tectorial membrane. In Rattus norvegicus (Rat), this protein is Cell adhesion molecule CEACAM16.